A 155-amino-acid polypeptide reads, in one-letter code: Vasotocin-neurophysin VT 2 (155 aa).

Positions 1–20 (MSVCAVLLLCVAGLLCLSSA) are cleaved as a signal peptide. A disulfide bond links Cys21 and Cys26. A Glycine amide modification is found at Gly29. 7 disulfide bridges follow: Cys42/Cys86, Cys45/Cys59, Cys53/Cys76, Cys60/Cys66, Cys93/Cys106, Cys100/Cys118, and Cys107/Cys112. A compositionally biased stretch (acidic residues) spans 119-128 (SEDSESEEPA). The segment at 119 to 139 (SEDSESEEPADQNTLGASPGE) is disordered.

Belongs to the vasopressin/oxytocin family.

Its subcellular location is the secreted. In terms of biological role, vasotocin is an antidiuretic hormone. The sequence is that of Vasotocin-neurophysin VT 2 from Catostomus commersonii (White sucker).